A 62-amino-acid chain; its full sequence is Large ribosomal subunit protein bL33 (62 aa).

This sequence belongs to the bacterial ribosomal protein bL33 family.

The polypeptide is Large ribosomal subunit protein bL33 (Trichodesmium erythraeum (strain IMS101)).